The chain runs to 123 residues: UPF0738 protein BCG9842_B4089 (123 aa).

Belongs to the UPF0738 family.

This is UPF0738 protein BCG9842_B4089 from Bacillus cereus (strain G9842).